The sequence spans 38 residues: Photosystem II reaction center protein L (38 aa).

A helical membrane pass occupies residues 17-37; it reads SLYWGLLLIFVLAVPFSNYFF.

Belongs to the PsbL family. PSII is composed of 1 copy each of membrane proteins PsbA, PsbB, PsbC, PsbD, PsbE, PsbF, PsbH, PsbI, PsbJ, PsbK, PsbL, PsbM, PsbT, PsbX, PsbY, PsbZ, Psb30/Ycf12, at least 3 peripheral proteins of the oxygen-evolving complex and a large number of cofactors. It forms dimeric complexes.

The protein localises to the plastid. It localises to the chloroplast thylakoid membrane. Its function is as follows. One of the components of the core complex of photosystem II (PSII). PSII is a light-driven water:plastoquinone oxidoreductase that uses light energy to abstract electrons from H(2)O, generating O(2) and a proton gradient subsequently used for ATP formation. It consists of a core antenna complex that captures photons, and an electron transfer chain that converts photonic excitation into a charge separation. This subunit is found at the monomer-monomer interface and is required for correct PSII assembly and/or dimerization. In Pinus thunbergii (Japanese black pine), this protein is Photosystem II reaction center protein L.